The following is a 251-amino-acid chain: Probable transcriptional regulatory protein AAur_2300 (251 aa).

Belongs to the TACO1 family.

It localises to the cytoplasm. The chain is Probable transcriptional regulatory protein AAur_2300 from Paenarthrobacter aurescens (strain TC1).